We begin with the raw amino-acid sequence, 144 residues long: Large ribosomal subunit protein uL16 (144 aa).

This sequence belongs to the universal ribosomal protein uL16 family. As to quaternary structure, part of the 50S ribosomal subunit.

Its function is as follows. Binds 23S rRNA and is also seen to make contacts with the A and possibly P site tRNAs. The sequence is that of Large ribosomal subunit protein uL16 from Lysinibacillus sphaericus (strain C3-41).